The primary structure comprises 58 residues: Large ribosomal subunit protein bL32c (58 aa).

Disordered regions lie at residues Met1 to Met21 and Leu34 to Asn58. The span at Gln44–Asn58 shows a compositional bias: low complexity.

The protein belongs to the bacterial ribosomal protein bL32 family.

Its subcellular location is the plastid. It localises to the chloroplast. The sequence is that of Large ribosomal subunit protein bL32c from Cyanidioschyzon merolae (strain NIES-3377 / 10D) (Unicellular red alga).